We begin with the raw amino-acid sequence, 214 residues long: Fruiting body protein SC14 (214 aa).

A signal peptide spans 1 to 18 (MKLNIAILLAALAATASA). Residues N61 and N144 are each glycosylated (N-linked (GlcNAc...) asparagine). Residues 72–195 (LTAHNDERAQ…KSLWYYVCNY (124 aa)) form the SCP domain.

It belongs to the CRISP family.

The protein resides in the secreted. This is Fruiting body protein SC14 (SC14) from Schizophyllum commune (Split gill fungus).